Consider the following 592-residue polypeptide: V-type ATP synthase alpha chain 1 (592 aa).

233 to 240 (GPFGSGKT) is a binding site for ATP.

It belongs to the ATPase alpha/beta chains family.

The catalysed reaction is ATP + H2O + 4 H(+)(in) = ADP + phosphate + 5 H(+)(out). In terms of biological role, produces ATP from ADP in the presence of a proton gradient across the membrane. The V-type alpha chain is a catalytic subunit. The protein is V-type ATP synthase alpha chain 1 of Clostridium tetani (strain Massachusetts / E88).